A 151-amino-acid polypeptide reads, in one-letter code: MIFGPTSVYSKCSAKSSGIIKDTAKLPISRVRIKVMLEITVSFLFFDRFPRSFLNHNLYDSICPFFAWQYTSYYLSIYRQSFLFHFLQKDFSNDFVSEELIYALVALGAKNSFDNSLSKHTYEYYNHSKRNLLEDSTNKNSAFSSASVTKP.

This is an uncharacterized protein from Saccharomyces cerevisiae (strain ATCC 204508 / S288c) (Baker's yeast).